We begin with the raw amino-acid sequence, 149 residues long: UPF0178 protein CPF_2548 (149 aa).

Belongs to the UPF0178 family.

The chain is UPF0178 protein CPF_2548 from Clostridium perfringens (strain ATCC 13124 / DSM 756 / JCM 1290 / NCIMB 6125 / NCTC 8237 / Type A).